The primary structure comprises 256 residues: Imidazole glycerol phosphate synthase subunit HisF (256 aa).

Residues D13 and D132 contribute to the active site.

Belongs to the HisA/HisF family. In terms of assembly, heterodimer of HisH and HisF.

It localises to the cytoplasm. It catalyses the reaction 5-[(5-phospho-1-deoxy-D-ribulos-1-ylimino)methylamino]-1-(5-phospho-beta-D-ribosyl)imidazole-4-carboxamide + L-glutamine = D-erythro-1-(imidazol-4-yl)glycerol 3-phosphate + 5-amino-1-(5-phospho-beta-D-ribosyl)imidazole-4-carboxamide + L-glutamate + H(+). Its pathway is amino-acid biosynthesis; L-histidine biosynthesis; L-histidine from 5-phospho-alpha-D-ribose 1-diphosphate: step 5/9. In terms of biological role, IGPS catalyzes the conversion of PRFAR and glutamine to IGP, AICAR and glutamate. The HisF subunit catalyzes the cyclization activity that produces IGP and AICAR from PRFAR using the ammonia provided by the HisH subunit. This chain is Imidazole glycerol phosphate synthase subunit HisF, found in Leptospira borgpetersenii serovar Hardjo-bovis (strain JB197).